Here is a 417-residue protein sequence, read N- to C-terminus: Probable pectate lyase 20 (417 aa).

A signal peptide spans 1-25; it reads MAVTQILVVFASALLLSMFFTGVDS. Asn-29 and Asn-53 each carry an N-linked (GlcNAc...) asparagine glycan. Asp-215, Asp-239, and Asp-243 together coordinate Ca(2+). The active site involves Arg-295.

Belongs to the polysaccharide lyase 1 family. It depends on Ca(2+) as a cofactor.

It carries out the reaction Eliminative cleavage of (1-&gt;4)-alpha-D-galacturonan to give oligosaccharides with 4-deoxy-alpha-D-galact-4-enuronosyl groups at their non-reducing ends.. Its pathway is glycan metabolism; pectin degradation; 2-dehydro-3-deoxy-D-gluconate from pectin: step 2/5. This Arabidopsis thaliana (Mouse-ear cress) protein is Probable pectate lyase 20.